The sequence spans 146 residues: Cyanate hydratase (146 aa).

Residues arginine 87, glutamate 90, and serine 113 contribute to the active site.

This sequence belongs to the cyanase family.

The catalysed reaction is cyanate + hydrogencarbonate + 3 H(+) = NH4(+) + 2 CO2. Its function is as follows. Catalyzes the reaction of cyanate with bicarbonate to produce ammonia and carbon dioxide. This is Cyanate hydratase from Nostoc sp. (strain PCC 7120 / SAG 25.82 / UTEX 2576).